The sequence spans 557 residues: Trigger factor (557 aa).

The 87-residue stretch at 169–255 (GDVVVIDFQA…LKEIKTKELP (87 aa)) folds into the PPIase FKBP-type domain. The disordered stretch occupies residues 438–557 (WVDSEGNPTE…KAGKKSKKDK (120 aa)). A compositionally biased stretch (basic and acidic residues) spans 455 to 466 (SEGEDRQERSES).

The protein belongs to the FKBP-type PPIase family. Tig subfamily.

It is found in the cytoplasm. It catalyses the reaction [protein]-peptidylproline (omega=180) = [protein]-peptidylproline (omega=0). Its function is as follows. Involved in protein export. Acts as a chaperone by maintaining the newly synthesized protein in an open conformation. Functions as a peptidyl-prolyl cis-trans isomerase. In Synechococcus sp. (strain JA-3-3Ab) (Cyanobacteria bacterium Yellowstone A-Prime), this protein is Trigger factor.